Consider the following 146-residue polypeptide: Oxygen-independent coproporphyrinogen III oxidase (146 aa).

Tyrosine 54 is an S-adenosyl-L-methionine binding site. Cysteine 60 and cysteine 64 together coordinate [4Fe-4S] cluster. Phenylalanine 66 is an S-adenosyl-L-methionine binding site. A [4Fe-4S] cluster-binding site is contributed by cysteine 67. Residues glycine 111–threonine 112 and glutamate 143 each bind S-adenosyl-L-methionine.

It belongs to the anaerobic coproporphyrinogen-III oxidase family. In terms of assembly, monomer. It depends on [4Fe-4S] cluster as a cofactor.

The protein localises to the cytoplasm. The enzyme catalyses coproporphyrinogen III + 2 S-adenosyl-L-methionine = protoporphyrinogen IX + 2 5'-deoxyadenosine + 2 L-methionine + 2 CO2. The protein operates within porphyrin-containing compound metabolism; protoporphyrin-IX biosynthesis; protoporphyrinogen-IX from coproporphyrinogen-III (AdoMet route): step 1/1. Functionally, involved in the heme biosynthesis. Catalyzes the anaerobic oxidative decarboxylation of propionate groups of rings A and B of coproporphyrinogen III to yield the vinyl groups in protoporphyrinogen IX. This chain is Oxygen-independent coproporphyrinogen III oxidase (hemN), found in Mannheimia haemolytica (Pasteurella haemolytica).